The following is a 305-amino-acid chain: UDP-N-acetylenolpyruvoylglucosamine reductase (305 aa).

An FAD-binding PCMH-type domain is found at 34–199 (RVGGPAQVLF…TSARFRGEVK (166 aa)). Arginine 179 is a catalytic residue. Serine 228 serves as the catalytic Proton donor. Glutamate 298 is a catalytic residue.

It belongs to the MurB family. Requires FAD as cofactor.

The protein resides in the cytoplasm. The enzyme catalyses UDP-N-acetyl-alpha-D-muramate + NADP(+) = UDP-N-acetyl-3-O-(1-carboxyvinyl)-alpha-D-glucosamine + NADPH + H(+). The protein operates within cell wall biogenesis; peptidoglycan biosynthesis. Its function is as follows. Cell wall formation. This Bradyrhizobium diazoefficiens (strain JCM 10833 / BCRC 13528 / IAM 13628 / NBRC 14792 / USDA 110) protein is UDP-N-acetylenolpyruvoylglucosamine reductase.